Reading from the N-terminus, the 531-residue chain is Doublesex- and mab-3-related transcription factor A2 (531 aa).

The DM DNA-binding region spans 69–116 (CARCRNHGVVSALKGHKRYCRWKDCLCAKCTLIAERQRVMAAQVALRR). The disordered stretch occupies residues 197-312 (LQAGRPDSPQ…GGPGPRQRTP (116 aa)). Low complexity predominate over residues 274–285 (PGSSSPLGSESG). Residues 310–345 (RTPLDILTRVFPGHRRGVLELVLQGCGGDVVQAIEQ) enclose the DMA domain.

Belongs to the DMRT family. In terms of tissue distribution, expressed in adult brain and testis, as well as in embryonic ovary, kidney, heart, lung, stomach and brain.

The protein localises to the nucleus. Functionally, may be involved in sexual development. The sequence is that of Doublesex- and mab-3-related transcription factor A2 (Dmrta2) from Mus musculus (Mouse).